A 547-amino-acid polypeptide reads, in one-letter code: Chaperonin GroEL (547 aa).

Residues 30 to 33 (TLGP), lysine 51, 87 to 91 (DGTTT), glycine 415, 479 to 481 (NAA), and aspartate 495 contribute to the ATP site. The disordered stretch occupies residues 526–547 (KKDEPTPPAAGGGMGGMGGMDF). Residues 535–547 (AGGGMGGMGGMDF) show a composition bias toward gly residues.

Belongs to the chaperonin (HSP60) family. As to quaternary structure, forms a cylinder of 14 subunits composed of two heptameric rings stacked back-to-back. Interacts with the co-chaperonin GroES.

It localises to the cytoplasm. The enzyme catalyses ATP + H2O + a folded polypeptide = ADP + phosphate + an unfolded polypeptide.. Functionally, together with its co-chaperonin GroES, plays an essential role in assisting protein folding. The GroEL-GroES system forms a nano-cage that allows encapsulation of the non-native substrate proteins and provides a physical environment optimized to promote and accelerate protein folding. This Xylella fastidiosa (strain M12) protein is Chaperonin GroEL.